The chain runs to 181 residues: Protein Syd (181 aa).

Belongs to the Syd family.

The protein localises to the cell inner membrane. Functionally, interacts with the SecY protein in vivo. May bind preferentially to an uncomplexed state of SecY, thus functioning either as a chelating agent for excess SecY in the cell or as a regulatory factor that negatively controls the translocase function. In Escherichia coli (strain K12 / DH10B), this protein is Protein Syd.